Here is a 360-residue protein sequence, read N- to C-terminus: Phenylalanine--tRNA ligase alpha subunit (360 aa).

A Mg(2+)-binding site is contributed by E260.

The protein belongs to the class-II aminoacyl-tRNA synthetase family. Phe-tRNA synthetase alpha subunit type 1 subfamily. Tetramer of two alpha and two beta subunits. Mg(2+) is required as a cofactor.

Its subcellular location is the cytoplasm. It carries out the reaction tRNA(Phe) + L-phenylalanine + ATP = L-phenylalanyl-tRNA(Phe) + AMP + diphosphate + H(+). This Rhizobium johnstonii (strain DSM 114642 / LMG 32736 / 3841) (Rhizobium leguminosarum bv. viciae) protein is Phenylalanine--tRNA ligase alpha subunit.